We begin with the raw amino-acid sequence, 81 residues long: Small ribosomal subunit protein bS16 (81 aa).

Belongs to the bacterial ribosomal protein bS16 family.

In Desulfotalea psychrophila (strain LSv54 / DSM 12343), this protein is Small ribosomal subunit protein bS16.